The chain runs to 1512 residues: Mitogen-activated protein kinase kinase kinase 1 (1512 aa).

A compositionally biased stretch (low complexity) spans 1-13; that stretch reads MAAAAGNRASSSG. Disordered stretches follow at residues 1–37, 67–181, and 213–304; these read MAAA…SSAP, SVEL…DRPE, and VKPI…PEET. N-acetylalanine is present on A2. Phosphoserine occurs at positions 21 and 35. Composition is skewed to low complexity over residues 81-99, 129-142, and 150-160; these read AASP…ADAA, AAPD…AAAE, and AAEPSPAAAPA. Residues S137 and S154 each carry the phosphoserine modification. A compositionally biased stretch (basic and acidic residues) spans 162-181; sequence REMENKETLKGLHKMDDRPE. Low complexity predominate over residues 250 to 260; the sequence is SPSPGNSPSGR. S275 carries the phosphoserine modification. T285 carries the phosphothreonine modification. S292, S297, and S300 each carry phosphoserine. Residues 338 to 366 form an SWIM-type zinc finger; it reads YRVFIGPQNCSCARGTFCIHLLFVMLRVF. A compositionally biased stretch (low complexity) spans 416 to 433; the sequence is SNSHTLSSSSTSTSSSEN. The tract at residues 416-436 is disordered; it reads SNSHTLSSSSTSTSSSENSIK. The RING-type zinc-finger motif lies at 443–492; sequence CPICLLGMLDEESLTVCEDGCRNKLHHHCMSIWAEECRRNREPLICPLCR. 2 positions are modified to phosphoserine: S507 and S531. 2 disordered regions span residues 511–532 and 602–624; these read SPSS…AGSR and STGN…GSSQ. Residues 611–624 show a composition bias toward low complexity; sequence GSSPSGGATSGSSQ. S923 is subject to Phosphoserine. The interval 933–972 is disordered; the sequence is SISVGPSSSTTTTTTTTEQPKPMVQTKGRPHSQCLNSSPL. Residues 939–949 show a composition bias toward low complexity; that stretch reads SSSTTTTTTTT. The residue at position 1018 (S1018) is a Phosphoserine. Residues 1032–1041 are compositionally biased toward basic and acidic residues; the sequence is NCPENKDSDK. The disordered stretch occupies residues 1032–1087; it reads NCPENKDSDKLSPVFTQSRPLPSSNIHRPKPSRPTPGNTSKQGDPSKNSMTLDLNS. S1043 is subject to Phosphoserine. Polar residues-rich tracts occupy residues 1045-1057 and 1066-1087; these read VFTQ…SSNI and TPGN…DLNS. Positions 1243–1508 constitute a Protein kinase domain; the sequence is WLKGQQIGLG…SRELLKHPVF (266 aa). ATP-binding positions include 1249 to 1257 and K1272; that span reads IGLGAFSSC. D1369 (proton acceptor) is an active-site residue. Phosphothreonine; by autocatalysis occurs at positions 1400 and 1412.

This sequence belongs to the protein kinase superfamily. STE Ser/Thr protein kinase family. MAP kinase kinase kinase subfamily. Binds both upstream activators and downstream substrates in multimolecular complexes through its N-terminus. Oligomerizes after binding MAP2K4 or TRAF2. Interacts with AXIN1. Interacts (via the kinase catalytic domain) with STK38. Interacts with GRIPAP1. Requires Mg(2+) as cofactor. Post-translationally, autophosphorylated.

The catalysed reaction is L-seryl-[protein] + ATP = O-phospho-L-seryl-[protein] + ADP + H(+). It carries out the reaction L-threonyl-[protein] + ATP = O-phospho-L-threonyl-[protein] + ADP + H(+). It catalyses the reaction S-ubiquitinyl-[E2 ubiquitin-conjugating enzyme]-L-cysteine + [acceptor protein]-L-lysine = [E2 ubiquitin-conjugating enzyme]-L-cysteine + N(6)-ubiquitinyl-[acceptor protein]-L-lysine.. Activated by autophosphorylation on Thr-1400 and Thr-1412 following oligomerization. Functionally, component of a protein kinase signal transduction cascade. Activates the ERK and JNK kinase pathways by phosphorylation of MAP2K1 and MAP2K4. May phosphorylate the MAPK8/JNK1 kinase. Activates CHUK and IKBKB, the central protein kinases of the NF-kappa-B pathway. In Homo sapiens (Human), this protein is Mitogen-activated protein kinase kinase kinase 1 (MAP3K1).